The following is a 113-amino-acid chain: Probable leucocin-A immunity protein (113 aa).

This sequence belongs to the immunity protein EntA family.

Functionally, imparts immunity to leucocin-A to naturally sensitive host strains. This is Probable leucocin-A immunity protein from Leuconostoc gelidum.